A 177-amino-acid chain; its full sequence is ATP-dependent protease subunit HslV (177 aa).

The active site involves Thr-2. Positions 158, 161, and 164 each coordinate Na(+).

It belongs to the peptidase T1B family. HslV subfamily. A double ring-shaped homohexamer of HslV is capped on each side by a ring-shaped HslU homohexamer. The assembly of the HslU/HslV complex is dependent on binding of ATP.

It localises to the cytoplasm. It carries out the reaction ATP-dependent cleavage of peptide bonds with broad specificity.. With respect to regulation, allosterically activated by HslU binding. Its function is as follows. Protease subunit of a proteasome-like degradation complex believed to be a general protein degrading machinery. The protein is ATP-dependent protease subunit HslV of Pseudomonas aeruginosa (strain LESB58).